The following is a 312-amino-acid chain: Cytochrome c biogenesis protein CcsA (312 aa).

8 consecutive transmembrane segments (helical) span residues 12 to 32 (NLVFGILLFAMTIYWISLSFF), 47 to 67 (IVANILLFFILGSRWIVAGYF), 72 to 92 (LYESLLFLTWTLLTIYLYVEF), 98 to 118 (LVGAILIPVALLINGFANLTL), 144 to 164 (MMLSYGTLIMGSLLCILFLVI), 220 to 240 (IIGLGFPFLTIGIIAGGVWAN), 254 to 271 (TWALITWIVFATYLHSRI), and 281 to 301 (AILGGLGFFVIWICYLGVNFL).

It belongs to the CcmF/CycK/Ccl1/NrfE/CcsA family. May interact with Ccs1.

The protein localises to the plastid. Its subcellular location is the chloroplast thylakoid membrane. Required during biogenesis of c-type cytochromes (cytochrome c6 and cytochrome f) at the step of heme attachment. The chain is Cytochrome c biogenesis protein CcsA from Trieres chinensis (Marine centric diatom).